The primary structure comprises 99 residues: UPF0235 protein Avin_03050 (99 aa).

The segment at 66–99 (VSLESGESNRQKRVRIRRPRQLPALPGLAPRPDA) is disordered. Basic residues predominate over residues 76-85 (QKRVRIRRPR).

It belongs to the UPF0235 family.

This chain is UPF0235 protein Avin_03050, found in Azotobacter vinelandii (strain DJ / ATCC BAA-1303).